The following is a 374-amino-acid chain: Pectate lyase 2 (374 aa).

The signal sequence occupies residues 1–22 (MKYLLPTAATGLLLLAAQPAVA). Cys93 and Cys176 form a disulfide bridge. Positions 150, 152, 187, and 191 each coordinate Ca(2+). Arg239 is a catalytic residue. Residues Cys350 and Cys373 are joined by a disulfide bond.

It belongs to the polysaccharide lyase 1 family. PLADES subfamily. It depends on Ca(2+) as a cofactor.

Its subcellular location is the secreted. It carries out the reaction Eliminative cleavage of (1-&gt;4)-alpha-D-galacturonan to give oligosaccharides with 4-deoxy-alpha-D-galact-4-enuronosyl groups at their non-reducing ends.. Its pathway is glycan metabolism; pectin degradation; 2-dehydro-3-deoxy-D-gluconate from pectin: step 2/5. In terms of biological role, involved in maceration and soft-rotting of plant tissue. The chain is Pectate lyase 2 (pel2) from Pectobacterium atrosepticum (strain SCRI 1043 / ATCC BAA-672) (Erwinia carotovora subsp. atroseptica).